The chain runs to 264 residues: 3'-5' ssDNA/RNA exonuclease TatD (264 aa).

A divalent metal cation contacts are provided by Glu-92, His-128, and His-153.

This sequence belongs to the metallo-dependent hydrolases superfamily. TatD-type hydrolase family. TatD subfamily. As to quaternary structure, monomer. Requires Mg(2+) as cofactor.

Its subcellular location is the cytoplasm. Its function is as follows. 3'-5' exonuclease that prefers single-stranded DNA and RNA. May play a role in the H(2)O(2)-induced DNA damage repair. This Musicola paradisiaca (strain Ech703) (Dickeya paradisiaca) protein is 3'-5' ssDNA/RNA exonuclease TatD.